The following is a 334-amino-acid chain: Holliday junction branch migration complex subunit RuvB (334 aa).

Residues 4 to 184 (ADRLISAAVI…FGIVQRLEFY (181 aa)) form a large ATPase domain (RuvB-L) region. Residues isoleucine 23, arginine 24, glycine 65, lysine 68, threonine 69, threonine 70, 131-133 (EDY), arginine 174, tyrosine 184, and arginine 221 each bind ATP. Residue threonine 69 coordinates Mg(2+). The small ATPAse domain (RuvB-S) stretch occupies residues 185–255 (PVADLEHIVS…VAMKALDMLN (71 aa)). Residues 258-334 (AEGFDFMDRK…YKHFGITREE (77 aa)) are head domain (RuvB-H). Residues arginine 294, arginine 313, and arginine 318 each coordinate DNA.

The protein belongs to the RuvB family. Homohexamer. Forms an RuvA(8)-RuvB(12)-Holliday junction (HJ) complex. HJ DNA is sandwiched between 2 RuvA tetramers; dsDNA enters through RuvA and exits via RuvB. An RuvB hexamer assembles on each DNA strand where it exits the tetramer. Each RuvB hexamer is contacted by two RuvA subunits (via domain III) on 2 adjacent RuvB subunits; this complex drives branch migration. In the full resolvosome a probable DNA-RuvA(4)-RuvB(12)-RuvC(2) complex forms which resolves the HJ.

It is found in the cytoplasm. It catalyses the reaction ATP + H2O = ADP + phosphate + H(+). Functionally, the RuvA-RuvB-RuvC complex processes Holliday junction (HJ) DNA during genetic recombination and DNA repair, while the RuvA-RuvB complex plays an important role in the rescue of blocked DNA replication forks via replication fork reversal (RFR). RuvA specifically binds to HJ cruciform DNA, conferring on it an open structure. The RuvB hexamer acts as an ATP-dependent pump, pulling dsDNA into and through the RuvAB complex. RuvB forms 2 homohexamers on either side of HJ DNA bound by 1 or 2 RuvA tetramers; 4 subunits per hexamer contact DNA at a time. Coordinated motions by a converter formed by DNA-disengaged RuvB subunits stimulates ATP hydrolysis and nucleotide exchange. Immobilization of the converter enables RuvB to convert the ATP-contained energy into a lever motion, pulling 2 nucleotides of DNA out of the RuvA tetramer per ATP hydrolyzed, thus driving DNA branch migration. The RuvB motors rotate together with the DNA substrate, which together with the progressing nucleotide cycle form the mechanistic basis for DNA recombination by continuous HJ branch migration. Branch migration allows RuvC to scan DNA until it finds its consensus sequence, where it cleaves and resolves cruciform DNA. The protein is Holliday junction branch migration complex subunit RuvB of Yersinia pestis bv. Antiqua (strain Angola).